Reading from the N-terminus, the 872-residue chain is C-mannosyltransferase dpy-19 homolog (872 aa).

9 helical membrane-spanning segments follow: residues 4–24, 126–146, 149–169, 179–199, 211–231, 257–277, 279–299, 326–346, and 399–419; these read PNLYVILSHALIGCGFFFLYV, FVWLMGGVTLLVLYLYGTLLS, IFGGIYGVISYLMFHSFVAKI, FAFPFIFLQMFYLCICIGRII, IFAMSLFTACALLSWQFSTFI, VLDYSLSHLLGHALAFVMSHG, SQLLLTWQLSISLFLFLITMV, FLMLTLLLASSVQTTLIELFN, and VKTMIVKPYCMYGVVMLAMFF. A coiled-coil region spans residues 508 to 535; the sequence is KRLRAQINRNSVKQRKERAQETKEAATD. The tract at residues 514 to 620 is disordered; the sequence is INRNSVKQRK…RSSSRRSSVV (107 aa). The segment covering 524-533 has biased composition (basic and acidic residues); it reads ERAQETKEAA. Residues 541–551 show a composition bias toward acidic residues; the sequence is TEEEDKDPEAE. 2 helical membrane-spanning segments follow: residues 627 to 647 and 678 to 698; these read ILNMHYVYSFLQMLVFTLIGL and NIFWSVSLAVFLLSMFDPGMV.

The protein belongs to the dpy-19 family.

It localises to the membrane. Functionally, probable C-mannosyltransferase that mediates C-mannosylation of tryptophan residues on target proteins. This is C-mannosyltransferase dpy-19 homolog from Drosophila melanogaster (Fruit fly).